The chain runs to 358 residues: tRNA-specific 2-thiouridylase MnmA (358 aa).

ATP is bound by residues 22–29 (LVSGGIDS) and Phe-48. The active-site Nucleophile is Cys-105. The cysteines at positions 105 and 201 are disulfide-linked. Gly-129 contacts ATP. Positions 151–153 (KEQ) are interaction with tRNA. Cys-201 acts as the Cysteine persulfide intermediate in catalysis. An interaction with tRNA region spans residues 306–307 (RY).

Belongs to the MnmA/TRMU family.

It is found in the cytoplasm. The catalysed reaction is S-sulfanyl-L-cysteinyl-[protein] + uridine(34) in tRNA + AH2 + ATP = 2-thiouridine(34) in tRNA + L-cysteinyl-[protein] + A + AMP + diphosphate + H(+). In terms of biological role, catalyzes the 2-thiolation of uridine at the wobble position (U34) of tRNA, leading to the formation of s(2)U34. The protein is tRNA-specific 2-thiouridylase MnmA of Desulfosudis oleivorans (strain DSM 6200 / JCM 39069 / Hxd3) (Desulfococcus oleovorans).